We begin with the raw amino-acid sequence, 360 residues long: MAQLSLQHIQKIYDNQVHVVKDFNLEIADKEFIVFVGPSGCGKSTTLRMIAGLEEISGGDLLIDGKRMNDVPAKARNIAMVFQNYALYPHMTVYDNMAFGLKMQKIAREVIDERVNWAAQILGLREYLKRKPGALSGGQRQRVALGRAIVREAGVFLMDEPLSNLDAKLRVQMRAEISKLHQKLNTTMIYVTHDQTEAMTMATRIVIMKDGIVQQVGAPKTVYNQPANMFVAGFIGSPAMNFIRGTIDGNKFVTETLKLTIPEEKLAVLKTQESLHKPIVMGIRPEDIHPDAQEENNISAKISVAELTGAEFMLYTTVGGHELVVRAGALNDYHAGENITIHFDMTKCHFFDAETEIAIC.

An ABC transporter domain is found at 4-235 (LSLQHIQKIY…PANMFVAGFI (232 aa)). 37–44 (GPSGCGKS) is an ATP binding site.

It belongs to the ABC transporter superfamily.

This is an uncharacterized protein from Escherichia coli O6:H1 (strain CFT073 / ATCC 700928 / UPEC).